The following is an 864-amino-acid chain: Leucine--tRNA ligase (864 aa).

The 'HIGH' region motif lies at 42 to 52 (PYPSGKLHMGH). A 'KMSKS' region motif is present at residues 624 to 628 (KMSKS). Position 627 (Lys627) interacts with ATP.

The protein belongs to the class-I aminoacyl-tRNA synthetase family.

It is found in the cytoplasm. It catalyses the reaction tRNA(Leu) + L-leucine + ATP = L-leucyl-tRNA(Leu) + AMP + diphosphate. In Burkholderia pseudomallei (strain 1710b), this protein is Leucine--tRNA ligase.